We begin with the raw amino-acid sequence, 845 residues long: Protein P (845 aa).

The interval 1 to 179 (MPLSYQHFRK…FCGSPYSWEQ (179 aa)) is terminal protein domain (TP). Positions 180 to 348 (ELHHGRSVTK…YCLSHLVNLL (169 aa)) are spacer. Disordered stretches follow at residues 186-205 (SVTK…QPSG), 222-245 (QPRL…SGSI), and 288-318 (YSHL…RSQS). Residues 289-301 (SHLSTSKRQSSSG) are compositionally biased toward polar residues. The tract at residues 349–692 (EDWGPCADHG…YMNLYPVARQ (344 aa)) is polymerase/reverse transcriptase domain (RT). The Reverse transcriptase domain occupies 359–602 (EHHIRIPRTP…YSLNFMGYII (244 aa)). Mg(2+)-binding residues include Asp431, Asp553, and Asp554.

The protein belongs to the hepadnaviridae P protein family.

It carries out the reaction DNA(n) + a 2'-deoxyribonucleoside 5'-triphosphate = DNA(n+1) + diphosphate. The catalysed reaction is Endonucleolytic cleavage to 5'-phosphomonoester.. With respect to regulation, activated by host HSP70 and HSP40 in vitro to be able to bind the epsilon loop of the pgRNA. Because deletion of the RNase H region renders the protein partly chaperone-independent, the chaperones may be needed indirectly to relieve occlusion of the RNA-binding site by this domain. Inhibited by several reverse-transcriptase inhibitors: Lamivudine, Adefovir and Entecavir. Functionally, multifunctional enzyme that converts the viral RNA genome into dsDNA in viral cytoplasmic capsids. This enzyme displays a DNA polymerase activity that can copy either DNA or RNA templates, and a ribonuclease H (RNase H) activity that cleaves the RNA strand of RNA-DNA heteroduplexes in a partially processive 3'- to 5'-endonucleasic mode. Neo-synthesized pregenomic RNA (pgRNA) are encapsidated together with the P protein, and reverse-transcribed inside the nucleocapsid. Initiation of reverse-transcription occurs first by binding the epsilon loop on the pgRNA genome, and is initiated by protein priming, thereby the 5'-end of (-)DNA is covalently linked to P protein. Partial (+)DNA is synthesized from the (-)DNA template and generates the relaxed circular DNA (RC-DNA) genome. After budding and infection, the RC-DNA migrates in the nucleus, and is converted into a plasmid-like covalently closed circular DNA (cccDNA). The activity of P protein does not seem to be necessary for cccDNA generation, and is presumably released from (+)DNA by host nuclear DNA repair machinery. This Hepatitis B virus genotype A3 (isolate Cameroon/CMR711/1994) (HBV-A) protein is Protein P.